The chain runs to 219 residues: Virginiamycin A acetyltransferase (219 aa).

The active site involves histidine 87.

Belongs to the transferase hexapeptide repeat family.

Functionally, inactivates the A compounds of virginiamycin-like antibiotics, thus providing resistance to these antibiotics. In Staphylococcus aureus, this protein is Virginiamycin A acetyltransferase (vat).